We begin with the raw amino-acid sequence, 257 residues long: 5'-nucleotidase SurE (257 aa).

4 residues coordinate a divalent metal cation: Asp-11, Asp-12, Ser-42, and Asn-99.

Belongs to the SurE nucleotidase family. It depends on a divalent metal cation as a cofactor.

The protein resides in the cytoplasm. It catalyses the reaction a ribonucleoside 5'-phosphate + H2O = a ribonucleoside + phosphate. Its function is as follows. Nucleotidase that shows phosphatase activity on nucleoside 5'-monophosphates. This chain is 5'-nucleotidase SurE, found in Flavobacterium psychrophilum (strain ATCC 49511 / DSM 21280 / CIP 103535 / JIP02/86).